The chain runs to 275 residues: Calcyphosin (275 aa).

Positions 59–87 (PGTTQLTQGPAGRTLGQTQASCPEPRPSM) are disordered. EF-hand domains are found at residues 107 to 142 (SGIQ…LGLV), 143 to 178 (LDQA…PMSQ), 179 to 214 (AREA…RAHP), and 222 to 258 (TEDE…VSAS). Ca(2+) contacts are provided by D120, D122, S124, S126, E131, D156, N158, S160, T162, E167, D192, S194, D196, and D203. S126 is subject to Phosphoserine; by PKA.

Monomer. Does not form oligomers in the presence of calcium.

It is found in the cytoplasm. Functionally, calcium-binding protein. May play a role in cellular signaling events (Potential). The protein is Calcyphosin of Homo sapiens (Human).